Consider the following 171-residue polypeptide: Ribosome maturation factor RimM (171 aa).

The region spanning Glu96–Met169 is the PRC barrel domain.

It belongs to the RimM family. In terms of assembly, binds ribosomal protein uS19.

The protein resides in the cytoplasm. An accessory protein needed during the final step in the assembly of 30S ribosomal subunit, possibly for assembly of the head region. Essential for efficient processing of 16S rRNA. May be needed both before and after RbfA during the maturation of 16S rRNA. It has affinity for free ribosomal 30S subunits but not for 70S ribosomes. The sequence is that of Ribosome maturation factor RimM from Clostridioides difficile (strain 630) (Peptoclostridium difficile).